Reading from the N-terminus, the 835-residue chain is Peptide transporter family 1 (835 aa).

11 consecutive transmembrane segments (helical) span residues 86-106 (IFFN…SIVA), 113-133 (FWTI…LALA), 150-170 (GLLI…AFGG), 183-203 (LFFS…TFIS), 222-242 (FGIP…GSFW), 325-345 (MFLP…VWLI), 368-388 (LNAV…YPVA), 401-421 (VTGG…QLQV), 697-717 (ILWQ…FSIT), 738-758 (WLLT…LNLF), and 765-785 (FFVY…LSIF). The tract at residues 814–835 (PRYSIDNKGFHPDEKDTFDMHF) is disordered. A compositionally biased stretch (basic and acidic residues) spans 821-835 (KGFHPDEKDTFDMHF).

Belongs to the major facilitator superfamily. Proton-dependent oligopeptide transporter (POT/PTR) (TC 2.A.17) family. As to expression, expressed specifically in the intestine.

It is found in the apical cell membrane. Low-affinity peptide transporter that is necessary for proton-dependent uptake of di- or tripeptides, and to a minor extent tetrapeptides, in the intestine. Transport is independent of sodium and chloride ions. Controls the uptake of dietary fatty acids, plays a role in fatty acid synthesis and is responsible for dipeptide-induced acidification of the intestine. Regulates cellular pH differences together with the antiporter protein, nhx-2. Amino acid uptake and absorption levels influence the insulin signaling/daf-2 and let-363/TOR pathways, subsequently affecting the stress response and longevity of the organism. It is required for the uptake of the L-enantiomers of various amino acids, including L-glutamate. In response to the availability of amino acid nutrients, may play a role in promoting reproduction and fertility. This is Peptide transporter family 1 from Caenorhabditis elegans.